A 332-amino-acid chain; its full sequence is 2,3-bisphosphoglycerate-dependent phosphoglycerate mutase 2 (332 aa).

The transit peptide at M1 to T48 directs the protein to the chloroplast. Residues R85–N92, T98–G99, R135, E189–Y192, K200, R216–R217, and G260–N261 contribute to the substrate site. Residue H86 is the Tele-phosphohistidine intermediate of the active site. The active-site Proton donor/acceptor is E189.

This sequence belongs to the phosphoglycerate mutase family. BPG-dependent PGAM subfamily.

It localises to the plastid. The protein resides in the chloroplast. It carries out the reaction (2R)-2-phosphoglycerate = (2R)-3-phosphoglycerate. Its pathway is carbohydrate degradation; glycolysis; pyruvate from D-glyceraldehyde 3-phosphate: step 3/5. Catalyzes the interconversion of 2-phosphoglycerate and 3-phosphoglycerate. This chain is 2,3-bisphosphoglycerate-dependent phosphoglycerate mutase 2, found in Arabidopsis thaliana (Mouse-ear cress).